The sequence spans 302 residues: Protoheme IX farnesyltransferase (302 aa).

9 consecutive transmembrane segments (helical) span residues 24 to 44, 48 to 68, 97 to 117, 120 to 140, 147 to 167, 174 to 194, 221 to 241, 245 to 265, and 282 to 302; these read VVSL…FSGY, FFSV…AGAL, AALV…ELAV, LSAV…TVYL, NIVV…AAVA, SLVL…ALAL, ILCY…LRFS, YMIV…NVYL, and FLLF…GMLI.

The protein belongs to the UbiA prenyltransferase family. Protoheme IX farnesyltransferase subfamily.

It is found in the cell inner membrane. It catalyses the reaction heme b + (2E,6E)-farnesyl diphosphate + H2O = Fe(II)-heme o + diphosphate. Its pathway is porphyrin-containing compound metabolism; heme O biosynthesis; heme O from protoheme: step 1/1. Its function is as follows. Converts heme B (protoheme IX) to heme O by substitution of the vinyl group on carbon 2 of heme B porphyrin ring with a hydroxyethyl farnesyl side group. This is Protoheme IX farnesyltransferase from Neorickettsia sennetsu (strain ATCC VR-367 / Miyayama) (Ehrlichia sennetsu).